The primary structure comprises 207 residues: MLYNIININILNSNILLDIISILSIISSIAIILVSNPMYSILYLIILFINIAIYLYLIGISIMSLLYILVYIGAIAVLFLFILSLFTALPYLLESKNLKITELNNTFLHKNNNIPLFILIIIIFYYNMINYFNNIYLNNNNINNNNINNLDNINNILLNNDWYKIFDINHLNQIGFLLYTEYSILLIFISFLLLFSILSAIVLTHNK.

5 helical membrane passes run 15-35 (ILLDIISILSIISSIAIILVS), 40-60 (SILYLIILFINIAIYLYLIGI), 66-86 (LYILVYIGAIAVLFLFILSLF), 116-136 (LFILIIIIFYYNMINYFNNIY), and 184-204 (ILLIFISFLLLFSILSAIVLT).

Belongs to the complex I subunit 6 family.

It localises to the mitochondrion membrane. The enzyme catalyses a ubiquinone + NADH + 5 H(+)(in) = a ubiquinol + NAD(+) + 4 H(+)(out). Its function is as follows. Core subunit of the mitochondrial membrane respiratory chain NADH dehydrogenase (Complex I) that is believed to belong to the minimal assembly required for catalysis. Complex I functions in the transfer of electrons from NADH to the respiratory chain. The immediate electron acceptor for the enzyme is believed to be ubiquinone. The sequence is that of NADH-ubiquinone oxidoreductase chain 6 (ND6) from Wickerhamomyces canadensis (Yeast).